The primary structure comprises 486 residues: NADH dehydrogenase [ubiquinone] flavoprotein 1, mitochondrial (486 aa).

The N-terminal 30 residues, 1–30 (MAPVRGILGLQRAVSIWKESNRLTPALRSF), are a transit peptide targeting the mitochondrion. Residues 31–40 (STQAASTSTT) are compositionally biased toward low complexity. The interval 31 to 57 (STQAASTSTTPQPPPPPPPPEKTHFGG) is disordered. The span at 41 to 50 (PQPPPPPPPP) shows a compositional bias: pro residues. NADH is bound at residue 110-119 (GRGGAGFPSG). FMN is bound at residue 222-270 (FGAGAYICGEETALLESLEGKQGKPRLKPPFPANAGLYGCPTTVTNVET). The [4Fe-4S] cluster site is built by C402, C405, C408, and C448.

Belongs to the complex I 51 kDa subunit family. In terms of assembly, complex I is composed of at least 49 different subunits. This is a component of the flavoprotein-sulfur (FP) fragment of the enzyme. Requires FMN as cofactor. [4Fe-4S] cluster serves as cofactor.

Its subcellular location is the mitochondrion inner membrane. The catalysed reaction is a ubiquinone + NADH + 5 H(+)(in) = a ubiquinol + NAD(+) + 4 H(+)(out). Core subunit of the mitochondrial membrane respiratory chain NADH dehydrogenase (Complex I) that is believed to belong to the minimal assembly required for catalysis. Complex I functions in the transfer of electrons from NADH to the respiratory chain. The immediate electron acceptor for the enzyme is believed to be ubiquinone. The polypeptide is NADH dehydrogenase [ubiquinone] flavoprotein 1, mitochondrial (Arabidopsis thaliana (Mouse-ear cress)).